Consider the following 507-residue polypeptide: Carboxypeptidase sxa2 (507 aa).

An N-terminal signal peptide occupies residues 1-22 (MLSLFLKSLFAIIIIELTIIHA). 2 N-linked (GlcNAc...) asparagine glycosylation sites follow: Asn-38 and Asn-45. The segment at 41–64 (SASSNQTVQPRQHAAPSSDRIKSL) is disordered. The active site involves Ser-200. Asn-259, Asn-260, and Asn-300 each carry an N-linked (GlcNAc...) asparagine glycan. The active site involves Asp-434. The N-linked (GlcNAc...) asparagine glycan is linked to Asn-448. His-487 is an active-site residue.

It belongs to the peptidase S10 family.

Its subcellular location is the secreted. Involved in degradation or processing of the mating pheromones. Its loss causes a persistent response to the pheromones. It may be required for stabilization of enzymes that are essential for zygote formation. May degrade the mating pheromone P-factor. The polypeptide is Carboxypeptidase sxa2 (sxa2) (Schizosaccharomyces pombe (strain 972 / ATCC 24843) (Fission yeast)).